The sequence spans 1069 residues: Acyl-CoA dehydrogenase family member 10 (1069 aa).

At lysine 413 the chain carries N6-succinyllysine. An N6-acetyllysine; alternate modification is found at lysine 427. An N6-succinyllysine; alternate modification is found at lysine 427. FAD contacts are provided by residues 792–802 (FAMTEPQVASS), serine 828, arginine 943, glutamine 1013, and glutamate 1044. Position 1052 is an N6-acetyllysine; alternate (lysine 1052). Lysine 1052 carries the post-translational modification N6-succinyllysine; alternate.

It belongs to the acyl-CoA dehydrogenase family. The cofactor is FAD.

It carries out the reaction a 2,3-saturated acyl-CoA + A = a 2,3-dehydroacyl-CoA + AH2. Acyl-CoA dehydrogenase only active with R- and S-2-methyl-C15-CoA. This chain is Acyl-CoA dehydrogenase family member 10 (Acad10), found in Mus musculus (Mouse).